A 475-amino-acid polypeptide reads, in one-letter code: Aspartyl/glutamyl-tRNA(Asn/Gln) amidotransferase subunit B (475 aa).

It belongs to the GatB/GatE family. GatB subfamily. In terms of assembly, heterotrimer of A, B and C subunits.

The catalysed reaction is L-glutamyl-tRNA(Gln) + L-glutamine + ATP + H2O = L-glutaminyl-tRNA(Gln) + L-glutamate + ADP + phosphate + H(+). It catalyses the reaction L-aspartyl-tRNA(Asn) + L-glutamine + ATP + H2O = L-asparaginyl-tRNA(Asn) + L-glutamate + ADP + phosphate + 2 H(+). In terms of biological role, allows the formation of correctly charged Asn-tRNA(Asn) or Gln-tRNA(Gln) through the transamidation of misacylated Asp-tRNA(Asn) or Glu-tRNA(Gln) in organisms which lack either or both of asparaginyl-tRNA or glutaminyl-tRNA synthetases. The reaction takes place in the presence of glutamine and ATP through an activated phospho-Asp-tRNA(Asn) or phospho-Glu-tRNA(Gln). The chain is Aspartyl/glutamyl-tRNA(Asn/Gln) amidotransferase subunit B from Agathobacter rectalis (strain ATCC 33656 / DSM 3377 / JCM 17463 / KCTC 5835 / VPI 0990) (Eubacterium rectale).